The sequence spans 503 residues: Maturase K (503 aa).

It belongs to the intron maturase 2 family. MatK subfamily.

It is found in the plastid. The protein resides in the chloroplast. Its function is as follows. Usually encoded in the trnK tRNA gene intron. Probably assists in splicing its own and other chloroplast group II introns. The chain is Maturase K from Rosa acicularis (Prickly rose).